A 323-amino-acid polypeptide reads, in one-letter code: Palmitoyltransferase ZDHHC20-B (323 aa).

At 1-14 (MAPTHVLRCCQRGL) the chain is on the cytoplasmic side. Residues 15 to 35 (AWIPVIFIALVVCWSYYAYVV) traverse the membrane as a helical segment. Residues 36 to 41 (ELCLLV) lie on the Lumenal side of the membrane. Residues 42 to 62 (YLVVFHLSFVMFVWSYWKTIF) traverse the membrane as a helical segment. Residues 63 to 157 (TKPANPSKEF…NNCVGFSNYK (95 aa)) lie on the Cytoplasmic side of the membrane. A DHHC domain is found at 114 to 164 (RYCDRCQVIKPDRCHHCSACDMCVLKMDHHCPWVNNCVGFSNYKFFILFLT). Cys-144 (S-palmitoyl cysteine intermediate) is an active-site residue. The helical transmembrane segment at 158 to 178 (FFILFLTYSLVYCLFIAASVL) threads the bilayer. The Lumenal portion of the chain corresponds to 179 to 195 (QYFIKFWTSDLPESHAK). The helical transmembrane segment at 196–219 (FHVLFLFFVAAMFCISILSLFTYH) threads the bilayer. At 220–323 (LWLVGKNRST…KQAKKKKTDE (104 aa)) the chain is on the cytoplasmic side.

This sequence belongs to the DHHC palmitoyltransferase family.

It is found in the golgi apparatus membrane. It localises to the cell membrane. The protein resides in the cytoplasm. Its subcellular location is the perinuclear region. The protein localises to the endoplasmic reticulum membrane. It is found in the endoplasmic reticulum-Golgi intermediate compartment membrane. It catalyses the reaction L-cysteinyl-[protein] + hexadecanoyl-CoA = S-hexadecanoyl-L-cysteinyl-[protein] + CoA. The enzyme catalyses L-cysteinyl-[protein] + tetradecanoyl-CoA = S-tetradecanoyl-L-cysteinyl-[protein] + CoA. It carries out the reaction L-cysteinyl-[protein] + octadecanoyl-CoA = S-octadecanoyl-L-cysteinyl-[protein] + CoA. Functionally, palmitoyltransferase that could catalyze the addition of palmitate onto various protein substrates. Catalyzes palmitoylation of Cys residues on protein substrates and has a preference for acyl-CoA with C16 fatty acid chains but may also utilize acyl-CoA with C14 and C18 fatty acid chains. This chain is Palmitoyltransferase ZDHHC20-B (zdhhc20b), found in Danio rerio (Zebrafish).